The chain runs to 394 residues: MERAIKNFLSQESAGGILLMVAVALAMILANSPLAGVYQGFLATEVQLRVGDLDIDKPLLLWINDGLMALFFLLIGLEVKRELLEGALSSVAKASLPSIAAIGGMVFPALFYLAFNYATPETQVGWAIPAATDIAFALGIMALLGNRVPVALKVFLLALAIIDDLGVIVIIALFYSTDLSMTSLVIAAVSIVLMVALNKKGVSSILPYGLLGFILWVAVLKSGVHATLAGVIIAFCIPLRAKDGTSPSEHLEHKLHPWSTFMILPVFAFANAGLSLTNMTLDSFAEPITLGIIMGLLLGKPIGVLLFSYLAVKLKLAELPPGIGWRHIIPVAVMCGIGFTMSVFIASLAFEHSPAAYGDYARLGILTGSLLAALIGYFWLAKVLPETGEKHETH.

A run of 11 helical transmembrane segments spans residues 17–37 (ILLM…LAGV), 59–79 (LLLW…GLEV), 95–115 (SLPS…YLAF), 124–144 (VGWA…MALL), 154–174 (VFLL…IALF), 177–197 (TDLS…MVAL), 213–233 (FILW…GVII), 261–281 (FMIL…NMTL), 287–307 (PITL…VLLF), 328–348 (IIPV…IASL), and 363–383 (LGIL…LAKV).

This sequence belongs to the NhaA Na(+)/H(+) (TC 2.A.33) antiporter family.

Its subcellular location is the cell inner membrane. It catalyses the reaction Na(+)(in) + 2 H(+)(out) = Na(+)(out) + 2 H(+)(in). Na(+)/H(+) antiporter that extrudes sodium in exchange for external protons. In Shewanella frigidimarina (strain NCIMB 400), this protein is Na(+)/H(+) antiporter NhaA.